A 100-amino-acid chain; its full sequence is uncharacterized protein (100 aa).

This is an uncharacterized protein from Homo sapiens (Human).